The chain runs to 213 residues: Uracil phosphoribosyltransferase (213 aa).

Residues arginine 78, arginine 103, and 131-139 contribute to the 5-phospho-alpha-D-ribose 1-diphosphate site; that span reads DPMLATGGT. Uracil contacts are provided by residues isoleucine 197 and 202 to 204; that span reads GDA. Aspartate 203 contacts 5-phospho-alpha-D-ribose 1-diphosphate.

Belongs to the UPRTase family. Requires Mg(2+) as cofactor.

It carries out the reaction UMP + diphosphate = 5-phospho-alpha-D-ribose 1-diphosphate + uracil. It participates in pyrimidine metabolism; UMP biosynthesis via salvage pathway; UMP from uracil: step 1/1. Allosterically activated by GTP. In terms of biological role, catalyzes the conversion of uracil and 5-phospho-alpha-D-ribose 1-diphosphate (PRPP) to UMP and diphosphate. This Bifidobacterium animalis subsp. lactis (strain AD011) protein is Uracil phosphoribosyltransferase.